The sequence spans 288 residues: Intermediate transcription factor 3 small subunit (288 aa).

It belongs to the orthopoxvirus OPG134 family. Heterodimer of a 45 kDa (A23R) and a 32 kDa (A8R) subunit to form the virus intermediate transcription factor (VITF)-3.

Its function is as follows. Acts with RNA polymerase to initiate transcription from intermediate gene promoters. This Homo sapiens (Human) protein is Intermediate transcription factor 3 small subunit (OPG134).